Consider the following 2014-residue polypeptide: MEASDQSQAKLTLSFGGIQHAFSVPIEDLSALQDQKDAFLRSRSQASLSETREPCSPAELMLDYLEFLSCRNLPPPLTKPVLLAFSRNFLHNTEIHSLLAKPEYTPQTRRRLVRTYYMAALSAAESHVKESALLDAARQGNFQLAAVFGGQSTANPACVRELAELFAAYTPFLGDLISTAAPTLSALCRLPETKEHFCGRHIDIETWLHDPASIPDGDFIATAPVSCPVVGLLNLAHYAVTCHVLGKTPGELRSHLQGVTGHSQGIVAAVAISLSDSWESFYEAARMTVETLFWIGFECHQRSPRTSVSLDQVQDSLQNGHGRPSCMLSIVGLSRAHIQDILLKLNRSLPEDEQVYLALDNARDSFVVAGPSCSLVHLHTYLRSLKADASIDQTRIPHSLRKPTVQHQFLPISVPFHTPYLQEAARAIKERLFPWRVVSGKLTIPVYDNRTGNDLRKSDNVNLIHTMVDSICWEPCSWPAALGIENISHIVAFGSGGVGELAMRLKDGQGVRVIIGSEFQSRDEEIGTKADLFSPTLLASSTIVGSWGERFRPRLSKSPTGEVKIETKLSRLLDTPPLMVAGMTPTTAAWDFVSAITNAGYHVELAGGGYYDMDAMAVAVKKLVASIPPGRGITCNVIYASPQTLSGQVTLLRRLSSQGLPIDGLTIGAGIPSLEVVSEYIQALGLRHISLKPGSITAIREVIEIAKAHPDFPIILQWTGGRGGGHHSFEDFHAPILRTYGALRRCSNIILVAGSGFGGSEDTYPYLSGTWSAQYGLPAMPFDGILLGSRIMVAKEAHTSPAAKRLITEASGVSDSDWEKTYQEATGGVITVVSEMGQPIHKIATRGVLFWAEMDKTIFSLPRTKRVPELLKRRDYIIKRLNADFAKPWFGQNSKGEPVDLSEMTYIEVLRRLVALMYVSHQSRWIDPSYMTLLMDVSVRILERFSIVDELDDALVLREPHRFVENIVRLCPPAAHDILSPEDVAWFLLRCKARGQKPVNFIPALDDDFETFFKKDSLWQSEDVDALIDQDAGRCCILHGPVAAQYSQDRDEPAKEILDGITQSWIDMIRHDFYPGGVTPSSDSGSLSSESWSVLTPDLTSRDESALLDIIPEMQAYCPSISSLGRSGSPWIHALLSDEFILQGRDRRPNPCRRVFHFGPGGSLQFDRAKSEITVSMENHAGNRSVMRIVCENGADISVDLQQPSAYTDEMVSLPLKFQYDPGMVPVGISEVMEGRNERIKSFYSKVWFGEDICRGMNARSVFHGSEMALTEAMHRDLLSTVSLAYPHSETALSGVDVFPISVGMFPVWDAMARPLVVNDIDGDLLRLVHESNTFEYCEASTPLRVGDVVSSTAAVRAVYIEDAGKHVVVEASIERSGKPVMKVVSTFLFKGVFNDWNSTFKTNKEPELVLDVQSDLDELVLRDREWLLLHDPSQSLVGCSLLFRLETQVTWKNRNTYRSLDVSGLVFLQQASDDLKEIGAVAFHAGECVGNPVLSFLQRKGSPATSPTPLTSPGWPGVSSLEVQLPTSNEMYTRTSRDYNPIHVSPLFSQWADLPGTITQGMYTSAISAAVLEHLALNGDRRRFRRFSARFTDMVLPGDRLLVNVKHVGSIQGRMLFNVSAFKQATNNMVLEAEAELEQPPTAFFFTGQGSQKPNMGMDLYNSSPVAKAIWDEADKYIFETYGWSILDIVKNNPKTLTIHFRGKHGRKIRANYLSMENKTVTPDGQIVKKPILPGLTDQTQSYTFTEPSGLLFFSTFAQPSIVVMEKATFEDMRSKGLIPQSAVFAGHSLGEYGALLAFSGFMSVRNLVDLVFYRGLSMQFAMERDERGETNFGMVAASPQRVGKSDAVFTESHLRSLVQMISIASHELLEMVNLNIENEQYVCAGTDTETQLLLEEMSTTEDRTTTKLYKLILKSIPATKKLPMPIRLQRGRCTIPIPGIDVPFHSSYLRSTVSSYRKILQQYISEEDVHLERLVGRWIPNVTAKPFMADEGYVREVFNITQSPILKEMLEL.

The acetyltransferase (AT) domain stretch occupies residues 144 to 515; that stretch reads LAAVFGGQST…KDGQGVRVII (372 aa). Serine 263 serves as the catalytic For acetyltransferase activity. An enoyl reductase (ER) domain region spans residues 570–815; it reads SRLLDTPPLM…LITEASGVSD (246 aa). The dehydratase (DH) domain stretch occupies residues 1126-1606; the sequence is RSGSPWIHAL…LPGDRLLVNV (481 aa). The MaoC-like domain maps to 1514–1627; sequence PGWPGVSSLE…FNVSAFKQAT (114 aa). Positions 1645 to 2005 are malonyl/palmitoyl transferase (MT/PT) domain; that stretch reads FFFTGQGSQK…VREVFNITQS (361 aa). Catalysis depends on serine 1790, which acts as the For malonyltransferase activity.

This sequence belongs to the fungal fatty acid synthetase subunit beta family. As to quaternary structure, [Alpha(6)beta(6)] hexamers of two multifunctional subunits (alpha and beta).

It carries out the reaction acetyl-CoA + n malonyl-CoA + 2n NADPH + 4n H(+) = a long-chain-acyl-CoA + n CoA + n CO2 + 2n NADP(+).. The catalysed reaction is holo-[ACP] + acetyl-CoA = acetyl-[ACP] + CoA. The enzyme catalyses holo-[ACP] + malonyl-CoA = malonyl-[ACP] + CoA. It catalyses the reaction a (3R)-hydroxyacyl-[ACP] = a (2E)-enoyl-[ACP] + H2O. It carries out the reaction a 2,3-saturated acyl-[ACP] + NAD(+) = a (2E)-enoyl-[ACP] + NADH + H(+). The catalysed reaction is (9Z)-octadecenoyl-[ACP] + H2O = (9Z)-octadecenoate + holo-[ACP] + H(+). The protein operates within secondary metabolite biosynthesis. Fatty acid synthase subunit beta; part of the gene cluster that mediates the biosynthesis of azaphilone pigments (MonAzPs), a complex mixture of compounds with a common azaphilone skeleton very widely used as food colorants. PigJ and pigK form the two subunits of a dedicated fungal fatty acid synthase (FAS) that produces the side chain fatty acyl moiety of MonAzPs, a beta-keto fatty acid. The chain length control of the pigJ-pigK FAS is somewhat flexible as MonAzPs features either a beta-ketooctanoic or a beta-ketodecanoic acid moiety. The beta-ketoacyl-ACP probably serves as the substrate for the acetyltransferase pigD that directly transfers the fatty acyl chain to the C-4 alcohol of the pyran ring. The first step of the pathway is performed by the nrPKS pigA that forms the hexaketide precursor from successive condensations of five malonyl-CoA units, with a simple acetyl-CoA starter unit. The role of esterase pigG is not clear, but it may play at most a supplementary role in the formation of the benzaldehyde produced by the pigA nrPKS. This very reactive benzaldehyde is intercepted by the pigC ketoreductase that to provide the first stable enzyme-free MonAzPs intermediate, 6-(4-hydroxy-2-oxopentyl)-3-methyl-2,4-dioxocyclohexane carbaldehyde, also known as M7PKS-1. The FAD-dependent monooxygenase pigN hydroxylates M7PKS-1 at C-4, which triggers the formation of the pyran ring. PigJ, pigK and pigD are involved in the acetylation of the pyran ring. PigJ and pigK form the two subunits of a dedicated fungal FAS that produces the side chain fatty acyl moiety of MonAzPs and pigD transfers the fatty acyl chain to the C-4 alcohol. PigM and pigO are involved in the elimination of the omega-1 alcohol. PigM acts as an O-acetyltransferase that synthesizes the putative O-11 acetyl intermediate whereas pigO eliminates acetic acid to yield an intermediate with a C10(11) double bond. The dehydration of the C-11 alcohol followed by the reduction of the C6(7) double bond by the NAD(P)H-dependent oxidoreductase pigE increases the electrophilicity of the C-5 ketone of the resulting acyl benzopyran. This in turn sets up the C-5 ketone for an intramolecular Knoevenagel aldol condensation with the C-20 enol of the side chain. This condensation affords the characteristic linear tricyclic carbon skeletons of the yellow pigments that serve as the common precursors for the classical yellow pigments monascin and ankaflavin, orange pigments rubopunctatin and monascorubrin, and red pigments ribropunctamine and monascorubramine. The FAD-dependent oxidoreductase pigF is especially invoved in the biosynthesis of orange and red pigments via desaturation of C6(7). The protein is Fatty acid synthase beta subunit pigK of Monascus ruber (Mold).